The primary structure comprises 194 residues: MGKRDQLKPKANVSSYIHFLLNYRNKFKEQQPNTYLGFKEFSRKCSEKWRSISKHEKAKYEALAKLDKARYQEEMMNYFGRRKKRRKRDPHAPRRPPSSFLLFCQDHYAQLKSENPSWSVVQVAKASGKMWSAKTDVDKQPYEQRAALLRAKYREELSVYRNQFNARKTCLQESATNQCREFEQAESDTTDGSN.

2 consecutive DNA-binding regions (HMG box) follow at residues 9-79 and 93-161; these read PKAN…MNYF and PRRP…SVYR.

It belongs to the HMGB family.

The protein localises to the nucleus. It is found in the chromosome. The protein is High mobility group protein B4 (HMGB4) of Bos taurus (Bovine).